The primary structure comprises 279 residues: Movement protein (279 aa).

The protein belongs to the cucumovirus movement protein family.

The protein localises to the host cell junction. The protein resides in the host plasmodesma. In terms of biological role, transports viral genome to neighboring plant cells directly through plasmosdesmata, without any budding. The movement protein allows efficient cell to cell propagation, by bypassing the host cell wall barrier. Acts by forming a tubular structure at the host plasmodesmata, enlarging it enough to allow free passage of virion capsids. The polypeptide is Movement protein (Cucumber mosaic virus (strain Kin) (CMV)).